A 388-amino-acid chain; its full sequence is 8-amino-7-oxononanoate synthase (388 aa).

Arg23 contacts substrate. 110 to 111 (GF) provides a ligand contact to pyridoxal 5'-phosphate. A substrate-binding site is contributed by His135. Positions 181, 209, and 235 each coordinate pyridoxal 5'-phosphate. Residue Lys238 is modified to N6-(pyridoxal phosphate)lysine. Substrate is bound at residue Thr352.

This sequence belongs to the class-II pyridoxal-phosphate-dependent aminotransferase family. BioF subfamily. Homodimer. The cofactor is pyridoxal 5'-phosphate.

It catalyses the reaction 6-carboxyhexanoyl-[ACP] + L-alanine + H(+) = (8S)-8-amino-7-oxononanoate + holo-[ACP] + CO2. The protein operates within cofactor biosynthesis; biotin biosynthesis. Its function is as follows. Catalyzes the decarboxylative condensation of pimeloyl-[acyl-carrier protein] and L-alanine to produce 8-amino-7-oxononanoate (AON), [acyl-carrier protein], and carbon dioxide. The polypeptide is 8-amino-7-oxononanoate synthase (Sodalis glossinidius (strain morsitans)).